The primary structure comprises 177 residues: Large ribosomal subunit protein uL6 (177 aa).

Belongs to the universal ribosomal protein uL6 family. As to quaternary structure, part of the 50S ribosomal subunit.

Functionally, this protein binds to the 23S rRNA, and is important in its secondary structure. It is located near the subunit interface in the base of the L7/L12 stalk, and near the tRNA binding site of the peptidyltransferase center. The protein is Large ribosomal subunit protein uL6 of Polynucleobacter necessarius subsp. necessarius (strain STIR1).